The following is a 129-amino-acid chain: UPF0102 protein Cag_1992 (129 aa).

This sequence belongs to the UPF0102 family.

The chain is UPF0102 protein Cag_1992 from Chlorobium chlorochromatii (strain CaD3).